Here is a 266-residue protein sequence, read N- to C-terminus: tRNA (guanine-N(1)-)-methyltransferase (266 aa).

S-adenosyl-L-methionine is bound by residues Gly-113 and 137–142 (LGDYVL).

This sequence belongs to the RNA methyltransferase TrmD family. As to quaternary structure, homodimer.

The protein resides in the cytoplasm. The catalysed reaction is guanosine(37) in tRNA + S-adenosyl-L-methionine = N(1)-methylguanosine(37) in tRNA + S-adenosyl-L-homocysteine + H(+). In terms of biological role, specifically methylates guanosine-37 in various tRNAs. The chain is tRNA (guanine-N(1)-)-methyltransferase from Paenarthrobacter aurescens (strain TC1).